The primary structure comprises 347 residues: Phosphate acyltransferase (347 aa).

This sequence belongs to the PlsX family. In terms of assembly, homodimer. Probably interacts with PlsY.

The protein localises to the cytoplasm. It catalyses the reaction a fatty acyl-[ACP] + phosphate = an acyl phosphate + holo-[ACP]. The protein operates within lipid metabolism; phospholipid metabolism. Its function is as follows. Catalyzes the reversible formation of acyl-phosphate (acyl-PO(4)) from acyl-[acyl-carrier-protein] (acyl-ACP). This enzyme utilizes acyl-ACP as fatty acyl donor, but not acyl-CoA. The sequence is that of Phosphate acyltransferase from Oleidesulfovibrio alaskensis (strain ATCC BAA-1058 / DSM 17464 / G20) (Desulfovibrio alaskensis).